We begin with the raw amino-acid sequence, 385 residues long: S-adenosylmethionine synthase (385 aa).

His-16 is an ATP binding site. Mg(2+) is bound at residue Asp-18. Glu-44 is a binding site for K(+). Positions 57 and 100 each coordinate L-methionine. A flexible loop region spans residues 100–110 (QSPDINQGVDR). ATP contacts are provided by residues 164–166 (DGK), 230–231 (KF), Asp-239, 245–246 (RK), Ala-262, and Lys-266. Residue Asp-239 coordinates L-methionine. Position 270 (Lys-270) interacts with L-methionine.

Belongs to the AdoMet synthase family. As to quaternary structure, homotetramer; dimer of dimers. Requires Mg(2+) as cofactor. K(+) is required as a cofactor.

The protein localises to the cytoplasm. It carries out the reaction L-methionine + ATP + H2O = S-adenosyl-L-methionine + phosphate + diphosphate. Its pathway is amino-acid biosynthesis; S-adenosyl-L-methionine biosynthesis; S-adenosyl-L-methionine from L-methionine: step 1/1. In terms of biological role, catalyzes the formation of S-adenosylmethionine (AdoMet) from methionine and ATP. The overall synthetic reaction is composed of two sequential steps, AdoMet formation and the subsequent tripolyphosphate hydrolysis which occurs prior to release of AdoMet from the enzyme. The protein is S-adenosylmethionine synthase of Helicobacter acinonychis (strain Sheeba).